We begin with the raw amino-acid sequence, 228 residues long: Protein GlxC (228 aa).

This sequence belongs to the FwdC/FmdC family.

In Rhizobium meliloti (strain 1021) (Ensifer meliloti), this protein is Protein GlxC (glxC).